The chain runs to 146 residues: Large ribosomal subunit protein uL15 (146 aa).

The disordered stretch occupies residues 1–42 (MTIKLHDLQPARGSKTTRTRVGRGEASKGKTAGRGTKGTKAR).

It belongs to the universal ribosomal protein uL15 family. Part of the 50S ribosomal subunit.

Its function is as follows. Binds to the 23S rRNA. This is Large ribosomal subunit protein uL15 from Mycobacterium leprae (strain Br4923).